The sequence spans 821 residues: Ribonuclease R (821 aa).

One can recognise an RNB domain in the interval 267–593; the sequence is RVDLRALPLV…LLHRAIKYLI (327 aa). One can recognise an S1 motif domain in the interval 652-733; it reads GEELEGVVAN…DDRQIDFELV (82 aa). Residues 739-821 are disordered; that stretch reads LRGQGKTAKK…KSGKVRDKTK (83 aa). 2 stretches are compositionally biased toward basic and acidic residues: residues 748–764 and 774–794; these read KRAD…KEAA and TKSE…EGRS. The segment covering 795–814 has biased composition (basic residues); sequence KPKKTKAPKKRKDQARKKSG.

Belongs to the RNR ribonuclease family. RNase R subfamily.

It localises to the cytoplasm. It catalyses the reaction Exonucleolytic cleavage in the 3'- to 5'-direction to yield nucleoside 5'-phosphates.. 3'-5' exoribonuclease that releases 5'-nucleoside monophosphates and is involved in maturation of structured RNAs. The sequence is that of Ribonuclease R from Vibrio cholerae serotype O1 (strain ATCC 39315 / El Tor Inaba N16961).